The chain runs to 360 residues: Flavin-dependent trigonelline monooxygenase, oxygenase component (360 aa).

This sequence belongs to the bacterial luciferase oxidoreductase family. In terms of assembly, homodimer. The trigonelline monooxygenase is composed of a reductase component TgnA and an oxygenase component TgnB.

The catalysed reaction is N-methylnicotinate + FMNH2 + O2 = (Z)-2-((N-methylformamido)methylene)-5-hydroxybutanolactone + FMN + H(+). The enzyme catalyses N-methylnicotinate + FADH2 + O2 = (Z)-2-((N-methylformamido)methylene)-5-hydroxybutanolactone + FAD + H(+). Involved in the degradation of the pyridine ring of trigonelline (TG; N-methylnicotinate) into succinate and methylamine as carbon and nitrogen sources, respectively. Catalyzes the insertion of two oxygens, followed by a ring cleavage of trigonelline to yield (Z)-2-((N-methylformamido)methylene)-5-hydroxybutyrolactone (MFMB). It is able to use reduced FMN or FAD. This chain is Flavin-dependent trigonelline monooxygenase, oxygenase component, found in Acinetobacter baylyi (strain ATCC 33305 / BD413 / ADP1).